The following is a 472-amino-acid chain: Glutamate--tRNA ligase 2 (472 aa).

Positions 10–20 (PSPTGYLHIGG) match the 'HIGH' region motif. Zn(2+)-binding residues include C99, C101, C126, and D128. The segment covering 112 to 130 (EQQARKEKPRYDGRCRDLD) has biased composition (basic and acidic residues). The interval 112 to 137 (EQQARKEKPRYDGRCRDLDGPPSEEV) is disordered. Positions 240–244 (RLSKR) match the 'KMSKS' region motif. K243 provides a ligand contact to ATP.

Belongs to the class-I aminoacyl-tRNA synthetase family. Glutamate--tRNA ligase type 1 subfamily. In terms of assembly, monomer. Zn(2+) serves as cofactor.

The protein localises to the cytoplasm. The enzyme catalyses tRNA(Glu) + L-glutamate + ATP = L-glutamyl-tRNA(Glu) + AMP + diphosphate. Catalyzes the attachment of glutamate to tRNA(Glu) in a two-step reaction: glutamate is first activated by ATP to form Glu-AMP and then transferred to the acceptor end of tRNA(Glu). This is Glutamate--tRNA ligase 2 from Halorhodospira halophila (strain DSM 244 / SL1) (Ectothiorhodospira halophila (strain DSM 244 / SL1)).